A 203-amino-acid chain; its full sequence is Holliday junction branch migration complex subunit RuvA (203 aa).

The domain I stretch occupies residues 1 to 63 (MIVSLRGTVE…EESQTLYGFT (63 aa)). Positions 64–142 (DDASRRMFVL…GFNDGIPAAA (79 aa)) are domain II. The interval 143–150 (QPQLSIAV) is flexible linker. Residues 150 to 203 (VDQAVQEQVLEALVGLGFSEKIALPVLSRVLRDSPELSKSQALRAALSELGTKN) are domain III.

It belongs to the RuvA family. As to quaternary structure, homotetramer. Forms an RuvA(8)-RuvB(12)-Holliday junction (HJ) complex. HJ DNA is sandwiched between 2 RuvA tetramers; dsDNA enters through RuvA and exits via RuvB. An RuvB hexamer assembles on each DNA strand where it exits the tetramer. Each RuvB hexamer is contacted by two RuvA subunits (via domain III) on 2 adjacent RuvB subunits; this complex drives branch migration. In the full resolvosome a probable DNA-RuvA(4)-RuvB(12)-RuvC(2) complex forms which resolves the HJ.

It is found in the cytoplasm. Functionally, the RuvA-RuvB-RuvC complex processes Holliday junction (HJ) DNA during genetic recombination and DNA repair, while the RuvA-RuvB complex plays an important role in the rescue of blocked DNA replication forks via replication fork reversal (RFR). RuvA specifically binds to HJ cruciform DNA, conferring on it an open structure. The RuvB hexamer acts as an ATP-dependent pump, pulling dsDNA into and through the RuvAB complex. HJ branch migration allows RuvC to scan DNA until it finds its consensus sequence, where it cleaves and resolves the cruciform DNA. This chain is Holliday junction branch migration complex subunit RuvA, found in Corynebacterium diphtheriae (strain ATCC 700971 / NCTC 13129 / Biotype gravis).